The primary structure comprises 229 residues: uncharacterized protein (229 aa).

Residues Gln-2–Pro-69 form the S4 RNA-binding domain. Asp-102 acts as the Nucleophile in catalysis.

This sequence belongs to the pseudouridine synthase RsuA family.

The enzyme catalyses a uridine in RNA = a pseudouridine in RNA. This is an uncharacterized protein from Rickettsia bellii (strain RML369-C).